The following is a 351-amino-acid chain: MLILGIETSCDETGVALFDAQRGLLAHALYSQIGMHADYGGVVPELASRDHVRKLLPLCDEVLAQAGKARSDIEGIAYTAGPGLVGALMVGGSVAHALGFALGIPVLGVHHMEGHLLAPMLEDNPPAFPFVALLVSGGHTQLVRVDGIGEYQMLGESVDDAAGEAFDKTAKMLGLDYPGGPRVAALAEKGREGQYRFPRPMTDRPGLDFSFSGLKTFTLNTVNDAKDKGTLDEQVKADIALAFEAAVVDTLVIKCRRALEQTGCKRLVIAGGVSANKRLRASLEAMAEKLRGSVFYARPEFCTDNGAMIAYAGAQRLKAGQQDGERIVAVPRWPMNTLPPVAEPRQNGLVD.

The Fe cation site is built by His-111 and His-115. Residues Leu-134 to Gly-138, Asp-167, Gly-180, and Asn-276 each bind substrate. Residue Asp-304 participates in Fe cation binding.

This sequence belongs to the KAE1 / TsaD family. Requires Fe(2+) as cofactor.

It is found in the cytoplasm. The catalysed reaction is L-threonylcarbamoyladenylate + adenosine(37) in tRNA = N(6)-L-threonylcarbamoyladenosine(37) in tRNA + AMP + H(+). Its function is as follows. Required for the formation of a threonylcarbamoyl group on adenosine at position 37 (t(6)A37) in tRNAs that read codons beginning with adenine. Is involved in the transfer of the threonylcarbamoyl moiety of threonylcarbamoyl-AMP (TC-AMP) to the N6 group of A37, together with TsaE and TsaB. TsaD likely plays a direct catalytic role in this reaction. The protein is tRNA N6-adenosine threonylcarbamoyltransferase of Marinobacter nauticus (strain ATCC 700491 / DSM 11845 / VT8) (Marinobacter aquaeolei).